The following is a 208-amino-acid chain: Methylthioribulose-1-phosphate dehydratase (208 aa).

Positions 98 and 100 each coordinate Zn(2+).

It belongs to the aldolase class II family. MtnB subfamily. Zn(2+) is required as a cofactor.

The enzyme catalyses 5-(methylsulfanyl)-D-ribulose 1-phosphate = 5-methylsulfanyl-2,3-dioxopentyl phosphate + H2O. It functions in the pathway amino-acid biosynthesis; L-methionine biosynthesis via salvage pathway; L-methionine from S-methyl-5-thio-alpha-D-ribose 1-phosphate: step 2/6. Functionally, catalyzes the dehydration of methylthioribulose-1-phosphate (MTRu-1-P) into 2,3-diketo-5-methylthiopentyl-1-phosphate (DK-MTP-1-P). In Marinobacter nauticus (strain ATCC 700491 / DSM 11845 / VT8) (Marinobacter aquaeolei), this protein is Methylthioribulose-1-phosphate dehydratase.